The primary structure comprises 407 residues: Protein ZNF365 (407 aa).

At S16 the chain carries Phosphoserine. The segment at 26–51 (LRCPRCGDHTRFRSLSSLRAHLEFSH) adopts a C2H2-type; degenerate zinc-finger fold. Position 138 is a phosphoserine (S138). A coiled-coil region spans residues 169–297 (VEAVDRTIEK…QLEYYQSQQA (129 aa)). T175 bears the Phosphothreonine mark. Residues 347–392 (LKKAKDDRASMQPAKAIHEQAESSRDLCRPPKKGELLGFGRKGNIR) form a disordered region. Residues 362 to 381 (AIHEQAESSRDLCRPPKKGE) show a composition bias toward basic and acidic residues. At S369 the chain carries Phosphoserine.

As to quaternary structure, homodimer. Interacts with NDE1 and NDEL1. Does not interact with TUBG1. Interacts with DISC1. Interacts with PARP1. Interacts with MCRS1. As to expression, isoform 1 is expressed in brain. Isoform 2 is expressed in placenta and at low level in lung and liver. Isoform 3 is expressed in kidney and pancreas. Isoform 1 is expressed exclusively in brain.

It is found in the cytoplasm. The protein resides in the cytoskeleton. It localises to the microtubule organizing center. Its subcellular location is the centrosome. In terms of biological role, involved in the regulation of neurogenesis. Negatively regulates neurite outgrowth. Involved in the morphogenesis of basket cells in the somatosensory cortex during embryogenesis. Involved in the positive regulation of oligodendrocyte differentiation during postnatal growth. Involved in dendritic arborization, morphogenesis of spine density dendrite, and establishment of postsynaptic dendrite density in cortical pyramidal neurons. Involved in homologous recombination (HR) repair pathway. Required for proper resolution of DNA double-strand breaks (DSBs) by HR. Is required for recovery of stalled replication forks, and directly contributes to genomic stability. Interacts with PARP1 and mediates MRE11-dependent DNA end resection during replication fork recovery. Contributes to genomic stability by preventing telomere dysfunction. This is Protein ZNF365 (ZNF365) from Homo sapiens (Human).